Consider the following 181-residue polypeptide: Nucleoside triphosphate/diphosphate phosphatase (181 aa).

Residue Arg26 is the Proton donor of the active site. Asn90, Asp106, Asp108, Asp110, Asp123, and Glu126 together coordinate Mg(2+).

It belongs to the Ntdp family. Requires Mg(2+) as cofactor.

The catalysed reaction is a ribonucleoside 5'-triphosphate + H2O = a ribonucleoside 5'-diphosphate + phosphate + H(+). It carries out the reaction a ribonucleoside 5'-diphosphate + H2O = a ribonucleoside 5'-phosphate + phosphate + H(+). Has nucleoside phosphatase activity towards nucleoside triphosphates and nucleoside diphosphates. This is Nucleoside triphosphate/diphosphate phosphatase from Ligilactobacillus salivarius (strain UCC118) (Lactobacillus salivarius).